The following is a 118-amino-acid chain: Ribonuclease P protein component (118 aa).

It belongs to the RnpA family. As to quaternary structure, consists of a catalytic RNA component (M1 or rnpB) and a protein subunit.

The catalysed reaction is Endonucleolytic cleavage of RNA, removing 5'-extranucleotides from tRNA precursor.. RNaseP catalyzes the removal of the 5'-leader sequence from pre-tRNA to produce the mature 5'-terminus. It can also cleave other RNA substrates such as 4.5S RNA. The protein component plays an auxiliary but essential role in vivo by binding to the 5'-leader sequence and broadening the substrate specificity of the ribozyme. This is Ribonuclease P protein component from Shewanella sp. (strain ANA-3).